A 106-amino-acid chain; its full sequence is Large ribosomal subunit protein uL24 (106 aa).

It belongs to the universal ribosomal protein uL24 family. As to quaternary structure, part of the 50S ribosomal subunit.

One of two assembly initiator proteins, it binds directly to the 5'-end of the 23S rRNA, where it nucleates assembly of the 50S subunit. Functionally, one of the proteins that surrounds the polypeptide exit tunnel on the outside of the subunit. In Acidovorax sp. (strain JS42), this protein is Large ribosomal subunit protein uL24.